The following is a 222-amino-acid chain: UPF0758 protein YicR (222 aa).

An MPN domain is found at 100–222; that stretch reads PLLSPEMTRE…YVSFAERGWI (123 aa). 3 residues coordinate Zn(2+): histidine 171, histidine 173, and aspartate 184. Positions 171-184 match the JAMM motif motif; the sequence is HNHPSGCAEPSKAD.

This sequence belongs to the UPF0758 family. YicR subfamily.

The protein is UPF0758 protein YicR of Escherichia coli O9:H4 (strain HS).